A 456-amino-acid chain; its full sequence is MLNNAMSVVILAAGKGTRMYSDLPKVLHTLAGKAMVQHVIDAANELGAAHVHLVYGHGGDLLKQALKDDNLNWVLQAEQLGTGHAMQQAAPFFADDEDILMLYGDVPLISVETLQRLRDAKPQGGIGLLTVKLDDPTGYGRITRENGKVTGIVEHKDATDEQRQIQEINTGILIANGADMKRWLAKLTNNNAQGEYYITDIIALAYQEGREIVAVHPQRLSEVEGVNNRLQLSRLERVYQSEQAEKLLLAGVMLRDPARFDLRGTLTHGRDVEIDTNVIIEGNVTLGHRVKIGSGCVIKNSVIGDDCEISPYTVVEDANLAAACTIGPFARLRPGAELLEGAHVGNFVEMKKARLGKGSKAGHLTYLGDAEIGDNVNIGAGTITCNYDGANKFKTIIGDDVFVGSDTQLVAPVTVGKGATIAAGTTVTRNVGENALAISRVPQTQKEGWRRPVKKK.

Residues 1–229 (MLNNAMSVVI…LSEVEGVNNR (229 aa)) form a pyrophosphorylase region. UDP-N-acetyl-alpha-D-glucosamine contacts are provided by residues 11–14 (LAAG), lysine 25, glutamine 76, 81–82 (GT), 103–105 (YGD), glycine 140, glutamate 154, asparagine 169, and asparagine 227. Aspartate 105 contacts Mg(2+). Asparagine 227 serves as a coordination point for Mg(2+). The tract at residues 230–250 (LQLSRLERVYQSEQAEKLLLA) is linker. The tract at residues 251-456 (GVMLRDPARF…EGWRRPVKKK (206 aa)) is N-acetyltransferase. Arginine 333 and lysine 351 together coordinate UDP-N-acetyl-alpha-D-glucosamine. The active-site Proton acceptor is histidine 363. The UDP-N-acetyl-alpha-D-glucosamine site is built by tyrosine 366 and asparagine 377. Acetyl-CoA contacts are provided by residues alanine 380, 386–387 (NY), serine 405, alanine 423, and arginine 440.

It in the N-terminal section; belongs to the N-acetylglucosamine-1-phosphate uridyltransferase family. The protein in the C-terminal section; belongs to the transferase hexapeptide repeat family. As to quaternary structure, homotrimer. It depends on Mg(2+) as a cofactor.

Its subcellular location is the cytoplasm. It carries out the reaction alpha-D-glucosamine 1-phosphate + acetyl-CoA = N-acetyl-alpha-D-glucosamine 1-phosphate + CoA + H(+). The catalysed reaction is N-acetyl-alpha-D-glucosamine 1-phosphate + UTP + H(+) = UDP-N-acetyl-alpha-D-glucosamine + diphosphate. It functions in the pathway nucleotide-sugar biosynthesis; UDP-N-acetyl-alpha-D-glucosamine biosynthesis; N-acetyl-alpha-D-glucosamine 1-phosphate from alpha-D-glucosamine 6-phosphate (route II): step 2/2. Its pathway is nucleotide-sugar biosynthesis; UDP-N-acetyl-alpha-D-glucosamine biosynthesis; UDP-N-acetyl-alpha-D-glucosamine from N-acetyl-alpha-D-glucosamine 1-phosphate: step 1/1. It participates in bacterial outer membrane biogenesis; LPS lipid A biosynthesis. Functionally, catalyzes the last two sequential reactions in the de novo biosynthetic pathway for UDP-N-acetylglucosamine (UDP-GlcNAc). The C-terminal domain catalyzes the transfer of acetyl group from acetyl coenzyme A to glucosamine-1-phosphate (GlcN-1-P) to produce N-acetylglucosamine-1-phosphate (GlcNAc-1-P), which is converted into UDP-GlcNAc by the transfer of uridine 5-monophosphate (from uridine 5-triphosphate), a reaction catalyzed by the N-terminal domain. This Escherichia coli O157:H7 (strain EC4115 / EHEC) protein is Bifunctional protein GlmU.